The primary structure comprises 332 residues: uncharacterized protein (332 aa).

Residues cysteine 27–leucine 47 traverse the membrane as a helical segment.

Its subcellular location is the membrane. This is an uncharacterized protein from Treponema pallidum (strain Nichols).